The chain runs to 69 residues: Cytochrome c oxidase subunit 8A, mitochondrial (69 aa).

A mitochondrion-targeting transit peptide spans 1-25; sequence MSVLTSLLLRGLTGSARRLPVPRAK. The Mitochondrial matrix segment spans residues 26–36; it reads VHSMPPEEELG. The chain crosses the membrane as a helical span at residues 37-60; that stretch reads IMEKAIGLTFCFVSLFLPAGWILS. Residues 61–69 are Mitochondrial intermembrane-facing; the sequence is HLEDYKRPE.

This sequence belongs to the cytochrome c oxidase VIII family. In terms of assembly, component of the cytochrome c oxidase (complex IV, CIV), a multisubunit enzyme composed of 14 subunits. The complex is composed of a catalytic core of 3 subunits MT-CO1, MT-CO2 and MT-CO3, encoded in the mitochondrial DNA, and 11 supernumerary subunits COX4I, COX5A, COX5B, COX6A, COX6B, COX6C, COX7A, COX7B, COX7C, COX8 and NDUFA4, which are encoded in the nuclear genome. The complex exists as a monomer or a dimer and forms supercomplexes (SCs) in the inner mitochondrial membrane with NADH-ubiquinone oxidoreductase (complex I, CI) and ubiquinol-cytochrome c oxidoreductase (cytochrome b-c1 complex, complex III, CIII), resulting in different assemblies (supercomplex SCI(1)III(2)IV(1) and megacomplex MCI(2)III(2)IV(2)). Post-translationally, in response to mitochondrial stress, the precursor protein is ubiquitinated by the SIFI complex in the cytoplasm before mitochondrial import, leading to its degradation. Within the SIFI complex, UBR4 initiates ubiquitin chain that are further elongated or branched by KCMF1.

Its subcellular location is the mitochondrion inner membrane. It participates in energy metabolism; oxidative phosphorylation. In terms of biological role, component of the cytochrome c oxidase, the last enzyme in the mitochondrial electron transport chain which drives oxidative phosphorylation. The respiratory chain contains 3 multisubunit complexes succinate dehydrogenase (complex II, CII), ubiquinol-cytochrome c oxidoreductase (cytochrome b-c1 complex, complex III, CIII) and cytochrome c oxidase (complex IV, CIV), that cooperate to transfer electrons derived from NADH and succinate to molecular oxygen, creating an electrochemical gradient over the inner membrane that drives transmembrane transport and the ATP synthase. Cytochrome c oxidase is the component of the respiratory chain that catalyzes the reduction of oxygen to water. Electrons originating from reduced cytochrome c in the intermembrane space (IMS) are transferred via the dinuclear copper A center (CU(A)) of subunit 2 and heme A of subunit 1 to the active site in subunit 1, a binuclear center (BNC) formed by heme A3 and copper B (CU(B)). The BNC reduces molecular oxygen to 2 water molecules using 4 electrons from cytochrome c in the IMS and 4 protons from the mitochondrial matrix. The sequence is that of Cytochrome c oxidase subunit 8A, mitochondrial (COX8A) from Macaca fascicularis (Crab-eating macaque).